Consider the following 702-residue polypeptide: Methionine--tRNA ligase (702 aa).

Positions 23-33 (PYANGPLHLGH) match the 'HIGH' region motif. Zn(2+)-binding residues include C154, C157, C167, and C170. Residues 341 to 345 (KMSKS) carry the 'KMSKS' region motif. K344 contributes to the ATP binding site. Residues 562–593 (LAPPPASAKQQNASMSNTAPPPTAEEPETTAP) are disordered. Polar residues predominate over residues 569–578 (AKQQNASMSN). The region spanning 599 to 702 (DFAKLDLRIG…SSAQPGMPVR (104 aa)) is the tRNA-binding domain.

It belongs to the class-I aminoacyl-tRNA synthetase family. MetG type 1 subfamily. As to quaternary structure, homodimer. Zn(2+) is required as a cofactor.

It is found in the cytoplasm. The enzyme catalyses tRNA(Met) + L-methionine + ATP = L-methionyl-tRNA(Met) + AMP + diphosphate. Functionally, is required not only for elongation of protein synthesis but also for the initiation of all mRNA translation through initiator tRNA(fMet) aminoacylation. This is Methionine--tRNA ligase from Xylella fastidiosa (strain M12).